The primary structure comprises 62 residues: MKVNDRVTVKTDGGPRRPGVVLAVEQFSEGVMYLVSLEDYPLGIWFFNEMGHSDGIFVELAE.

Belongs to the DsrB family.

The polypeptide is Protein DsrB (Enterobacter sp. (strain 638)).